A 128-amino-acid chain; its full sequence is Small ribosomal subunit protein uS11 (128 aa).

The protein belongs to the universal ribosomal protein uS11 family. As to quaternary structure, part of the 30S ribosomal subunit. Interacts with proteins S7 and S18. Binds to IF-3.

In terms of biological role, located on the platform of the 30S subunit, it bridges several disparate RNA helices of the 16S rRNA. Forms part of the Shine-Dalgarno cleft in the 70S ribosome. The protein is Small ribosomal subunit protein uS11 of Phytoplasma australiense.